The chain runs to 333 residues: Complement C1q and tumor necrosis factor-related protein 9B (333 aa).

The signal sequence occupies residues 1-19; that stretch reads MRIWWLLLAIEICTGNINS. 3 consecutive Collagen-like domains span residues 24–82, 95–154, and 155–191; these read RQGH…DGKV, GSPG…PGPM, and GPIGKPGPKGEAGPTGPQGEPGVRGIRGWKGDRGEKG. The segment at 24-189 is disordered; it reads RQGHPGIPGN…IRGWKGDRGE (166 aa). Positions 26-40 are enriched in low complexity; that stretch reads GHPGIPGNPGHNGLP. Composition is skewed to basic and acidic residues over residues 42–55 and 69–88; these read RDGRDGAKGDKGDA and TSGEKGERGADGKVEAKGIK. The 137-residue stretch at 197-333 folds into the C1q domain; that stretch reads LVLPKSAFTV…FTGFLLFSSQ (137 aa).

Interacts with CTRP9A and ADIPOQ. Forms heterotrimers and heterooligomeric complexes with CTRP9A. As to expression, expressed at low levels. Not expressed in adipose tissues.

Its subcellular location is the secreted. Its function is as follows. Probable adipokine. Activates AMPK, AKT, and p44/42 MAPK signaling pathways. In Homo sapiens (Human), this protein is Complement C1q and tumor necrosis factor-related protein 9B (C1QTNF9B).